An 85-amino-acid polypeptide reads, in one-letter code: Contulakin-Lt2 (85 aa).

The N-terminal stretch at 1 to 22 (MQMAYWVMVMMMVGITAPLSEG) is a signal peptide. Positions 23-61 (RKLNDAIRGLVPNDLTPQLLQSLVSRRHRVFHLDNTYLK) are excised as a propeptide. C65 and C70 are oxidised to a cystine. The propeptide occupies 76–85 (RRRDLKKRNK).

It belongs to the conotoxin C superfamily. In terms of tissue distribution, expressed by the venom duct.

The protein resides in the secreted. Functionally, acts as an agonist of neurotensin receptors. It binds to human neurotensin type 1 receptor (NTSR1), rat neurotensin types 1 and 2 receptors (NTSR1/NTSR2) and mouse neurotensin type 3 receptor (SORT1). The protein is Contulakin-Lt2 of Conus litteratus (Lettered cone).